Consider the following 130-residue polypeptide: Small ribosomal subunit protein uS8 (130 aa).

This sequence belongs to the universal ribosomal protein uS8 family.

This chain is Small ribosomal subunit protein uS8 (RPS15A), found in Paracentrotus lividus (Common sea urchin).